The following is a 474-amino-acid chain: Protein NAR1 (474 aa).

[4Fe-4S] cluster contacts are provided by Cys-24, Cys-61, Cys-64, Cys-67, Cys-177, Cys-233, Cys-390, and Cys-394.

It belongs to the NARF family. As to quaternary structure, part of a complex composed of AE7, CIA1, MMS19 and NAR1. Interacts with CIA1. In terms of tissue distribution, expressed in developing tissues, including shoot apex, young leaves, vascular tissues, root tips, pedicels, carpels and developing seeds.

It localises to the nucleus. It is found in the cytoplasm. In terms of biological role, essential component of the cytosolic iron-sulfur (Fe-S) protein assembly (CIA) machinery. Required for the maturation of extramitochondrial Fe/S proteins. Required for expression of the imprinted FWA gene, for seed development and is involved in the oxidative stress response in vegetative tissues. Involved in the regulation of cell size, ploidy and cell cycle progression. Required for growth under normoxic conditions and necessary for recovery after hypoxic treatment but its action is reactive oxygen species (ROS) independent. This chain is Protein NAR1, found in Arabidopsis thaliana (Mouse-ear cress).